A 255-amino-acid chain; its full sequence is tRNA pseudouridine synthase A (255 aa).

Residue Asp52 is the Nucleophile of the active site. Tyr111 is a substrate binding site.

Belongs to the tRNA pseudouridine synthase TruA family. Homodimer.

It carries out the reaction uridine(38/39/40) in tRNA = pseudouridine(38/39/40) in tRNA. Its function is as follows. Formation of pseudouridine at positions 38, 39 and 40 in the anticodon stem and loop of transfer RNAs. The chain is tRNA pseudouridine synthase A from Cereibacter sphaeroides (strain KD131 / KCTC 12085) (Rhodobacter sphaeroides).